A 596-amino-acid chain; its full sequence is Chaperone protein DnaK (596 aa).

A Phosphothreonine; by autocatalysis modification is found at Thr174. A disordered region spans residues Ala576–Glu596.

It belongs to the heat shock protein 70 family.

Functionally, acts as a chaperone. The polypeptide is Chaperone protein DnaK (Mycoplasmopsis synoviae (strain 53) (Mycoplasma synoviae)).